We begin with the raw amino-acid sequence, 311 residues long: Aquaporin Lacbi1:392091 (311 aa).

At 1–16 (MHPQVASLFDNVYEDL) the chain is on the cytoplasmic side. Residues 17–37 (AAATLEFIGTAFFLLFGLGGI) form a helical membrane-spanning segment. The Extracellular portion of the chain corresponds to 38–56 (QASTAEDTASGQPPASGIE). Residues 57-77 (HVLYISTCMGLSLVVSAWLFF) traverse the membrane as a helical segment. Residue arginine 78 is a topological domain, cytoplasmic. Residues 79-99 (VTGGLFNPNISFALLLVGGLK) traverse the membrane as a helical segment. Positions 85-87 (NPN) match the NPA 1 motif. Residue proline 100 is a topological domain, extracellular. A helical membrane pass occupies residues 101–121 (LRFVLFCIAQLTGAIAGAAIV). The Cytoplasmic portion of the chain corresponds to 122–143 (RGLTSAPLSVNNVLQQGTSAAQ). Residues 144–164 (GVFIEMFITAALVLSVLMLAA) traverse the membrane as a helical segment. Topologically, residues 165–168 (EKHE) are extracellular. A helical transmembrane segment spans residues 169-189 (ATPFAPVGIGLTLFACHLFAV). Over 190 to 215 (YYTGAAMNSARAFGPAVISGFPEPQH) the chain is Cytoplasmic. An NPA 2 motif is present at residues 197-199 (NSA). The chain crosses the membrane as a helical span at residues 216 to 236 (WVYWVGPFLGSLLGAGFYATL). Residues 237–311 (KHYKYWHLNP…TSSRTNFSPV (75 aa)) are Extracellular-facing. The interval 276 to 311 (DEETRNGCASNEEGVRATGDEKSSNATSSRTNFSPV) is disordered. The span at 288–298 (EGVRATGDEKS) shows a compositional bias: basic and acidic residues. The segment covering 299–311 (SNATSSRTNFSPV) has biased composition (polar residues). The N-linked (GlcNAc...) asparagine glycan is linked to asparagine 300.

Belongs to the MIP/aquaporin (TC 1.A.8) family.

It localises to the membrane. It carries out the reaction H2O(in) = H2O(out). The enzyme catalyses NH4(+)(in) = NH4(+)(out). Its function is as follows. Water channel required to facilitate the transport of water across membranes. Also enables low but statistically significant ammonium permeability. May be involved in fungal nitrogen (ammonium) support of the plant host in symbiosis. This is Aquaporin Lacbi1:392091 from Laccaria bicolor (strain S238N-H82 / ATCC MYA-4686) (Bicoloured deceiver).